The following is a 109-amino-acid chain: UPF0122 protein Cbei_1174 (109 aa).

The protein belongs to the UPF0122 family.

Functionally, might take part in the signal recognition particle (SRP) pathway. This is inferred from the conservation of its genetic proximity to ftsY/ffh. May be a regulatory protein. This chain is UPF0122 protein Cbei_1174, found in Clostridium beijerinckii (strain ATCC 51743 / NCIMB 8052) (Clostridium acetobutylicum).